Consider the following 469-residue polypeptide: DNA repair and recombination protein rad22 (469 aa).

Residues 265–296 (PAANNHHSEKAGTQINNKDKGSHNSAKPVQRS) form a disordered region. Over residues 287–296 (HNSAKPVQRS) the composition is skewed to polar residues. S296 and S319 each carry phosphoserine. Residues 429-469 (LHDSTTSHNKSDLMRTNSDPQSAMRSRENYDATVDKKAKKG) form a disordered region. Polar residues predominate over residues 431-452 (DSTTSHNKSDLMRTNSDPQSAM). Positions 453–469 (RSRENYDATVDKKAKKG) are enriched in basic and acidic residues.

Belongs to the RAD52 family. As to quaternary structure, interacts with rhp51.

The protein localises to the nucleus. Active in the repair of DNA damage and in mating-type switching. Probably involved in the repair of DNA double-strands breaks. Has a role in promoting S phase completion. The protein is DNA repair and recombination protein rad22 (rad22) of Schizosaccharomyces pombe (strain 972 / ATCC 24843) (Fission yeast).